An 851-amino-acid chain; its full sequence is UPF0182 protein CYA_1810 (851 aa).

The next 7 membrane-spanning stretches (helical) occupy residues 7 to 27 (GLVL…LASF), 47 to 67 (VLAR…VVGS), 76 to 96 (ASTA…AWSL), 141 to 161 (FNLV…ELGL), 168 to 188 (LALS…LFLL), 220 to 240 (LPAT…FWAL), and 259 to 279 (WASS…FGLL).

This sequence belongs to the UPF0182 family.

It localises to the cell membrane. This chain is UPF0182 protein CYA_1810, found in Synechococcus sp. (strain JA-3-3Ab) (Cyanobacteria bacterium Yellowstone A-Prime).